The following is a 543-amino-acid chain: Chaperonin GroEL (543 aa).

ATP-binding positions include 29-32 (TLGP), 86-90 (DGTTT), G413, 477-479 (DAL), and D493.

The protein belongs to the chaperonin (HSP60) family. Forms a cylinder of 14 subunits composed of two heptameric rings stacked back-to-back. Interacts with the co-chaperonin GroES.

Its subcellular location is the cytoplasm. It carries out the reaction ATP + H2O + a folded polypeptide = ADP + phosphate + an unfolded polypeptide.. In terms of biological role, together with its co-chaperonin GroES, plays an essential role in assisting protein folding. The GroEL-GroES system forms a nano-cage that allows encapsulation of the non-native substrate proteins and provides a physical environment optimized to promote and accelerate protein folding. This is Chaperonin GroEL from Clostridium novyi (strain NT).